We begin with the raw amino-acid sequence, 1036 residues long: Isoleucine--tRNA ligase (1036 aa).

Positions proline 46 to histidine 56 match the 'HIGH' region motif. Residues lysine 589 to arginine 593 carry the 'KMSKS' region motif. Lysine 592 contacts ATP.

Belongs to the class-I aminoacyl-tRNA synthetase family. IleS type 2 subfamily. In terms of assembly, monomer. Zn(2+) is required as a cofactor.

It localises to the cytoplasm. It catalyses the reaction tRNA(Ile) + L-isoleucine + ATP = L-isoleucyl-tRNA(Ile) + AMP + diphosphate. In terms of biological role, catalyzes the attachment of isoleucine to tRNA(Ile). As IleRS can inadvertently accommodate and process structurally similar amino acids such as valine, to avoid such errors it has two additional distinct tRNA(Ile)-dependent editing activities. One activity is designated as 'pretransfer' editing and involves the hydrolysis of activated Val-AMP. The other activity is designated 'posttransfer' editing and involves deacylation of mischarged Val-tRNA(Ile). The sequence is that of Isoleucine--tRNA ligase from Chlamydia trachomatis serovar D (strain ATCC VR-885 / DSM 19411 / UW-3/Cx).